The sequence spans 141 residues: Small ribosomal subunit protein eS12 (141 aa).

The protein belongs to the eukaryotic ribosomal protein eS12 family. As to quaternary structure, component of the small ribosomal subunit. Mature ribosomes consist of a small (40S) and a large (60S) subunit. The 40S subunit contains about 32 different proteins and 1 molecule of RNA (18S). The 60S subunit contains about 42 different proteins and 3 molecules of RNA (28S, 5.8S and 5S).

Its subcellular location is the cytoplasm. In terms of biological role, component of the ribosome, a large ribonucleoprotein complex responsible for the synthesis of proteins in the cell. The small ribosomal subunit (SSU) binds messenger RNAs (mRNAs) and translates the encoded message by selecting cognate aminoacyl-transfer RNA (tRNA) molecules. The large subunit (LSU) contains the ribosomal catalytic site termed the peptidyl transferase center (PTC), which catalyzes the formation of peptide bonds, thereby polymerizing the amino acids delivered by tRNAs into a polypeptide chain. The nascent polypeptides leave the ribosome through a tunnel in the LSU and interact with protein factors that function in enzymatic processing, targeting, and the membrane insertion of nascent chains at the exit of the ribosomal tunnel. The chain is Small ribosomal subunit protein eS12 from Plasmodium falciparum (isolate 3D7).